Consider the following 205-residue polypeptide: UPF0316 protein Cthe_2213 (205 aa).

3 helical membrane-spanning segments follow: residues 15 to 37 (LPLL…IIFV), 44 to 64 (LAPV…SQIM), and 70 to 90 (FVCY…GIII).

This sequence belongs to the UPF0316 family.

It localises to the cell membrane. This Acetivibrio thermocellus (strain ATCC 27405 / DSM 1237 / JCM 9322 / NBRC 103400 / NCIMB 10682 / NRRL B-4536 / VPI 7372) (Clostridium thermocellum) protein is UPF0316 protein Cthe_2213.